The primary structure comprises 115 residues: Selenoprotein K homolog (115 aa).

The helical transmembrane segment at Phe29 to Val49 threads the bilayer. The tract at residues Thr48 to Lys115 is disordered. Positions Gln58 to Pro84 are enriched in gly residues. Positions Ala104 to Lys115 are enriched in polar residues. Residue Sec112 is a non-standard amino acid, selenocysteine.

It belongs to the selenoprotein K family.

Its subcellular location is the membrane. The chain is Selenoprotein K homolog (selk) from Dictyostelium discoideum (Social amoeba).